The following is a 148-amino-acid chain: Probable 4-amino-4-deoxy-L-arabinose-phosphoundecaprenol flippase subunit ArnF (148 aa).

At 1–23 the chain is on the cytoplasmic side; that stretch reads MRGDNTGVGKEPAVTERPAIKGY. A helical transmembrane segment spans residues 24-44; sequence LYVLGSILLVTLAQLAMKWGV. Over 45 to 63 the chain is Periplasmic; it reads MQLPAWQASLDIMLAHPVP. Residues 64–84 form a helical membrane-spanning segment; sequence LLVITAGVGCYALSLLCWLAA. At 85–91 the chain is on the cytoplasmic side; sequence LHFTPLN. A helical transmembrane segment spans residues 92-112; sequence IAYPLLSTSYALVYLLAVSIP. At 113–117 the chain is on the periplasmic side; it reads SFAEP. A helical transmembrane segment spans residues 118–138; sequence LEPGKAVGVIFILLGAVLVGI. The Cytoplasmic portion of the chain corresponds to 139-148; it reads KPVGRKRNAH.

Belongs to the ArnF family. As to quaternary structure, heterodimer of ArnE and ArnF.

It is found in the cell inner membrane. It functions in the pathway bacterial outer membrane biogenesis; lipopolysaccharide biosynthesis. Its function is as follows. Translocates 4-amino-4-deoxy-L-arabinose-phosphoundecaprenol (alpha-L-Ara4N-phosphoundecaprenol) from the cytoplasmic to the periplasmic side of the inner membrane. The sequence is that of Probable 4-amino-4-deoxy-L-arabinose-phosphoundecaprenol flippase subunit ArnF from Aeromonas salmonicida (strain A449).